A 394-amino-acid chain; its full sequence is Choline/ethanolamine kinase (394 aa).

The disordered stretch occupies residues 1-42; that stretch reads MAADGTGVVGGGAVGGGLPKDGLQDAKCPEPIPNRRRASSLS. Alanine 2 carries the post-translational modification N-acetylalanine. Over residues 7–19 the composition is skewed to gly residues; it reads GVVGGGAVGGGLP. Residues 75–81, arginine 104, 146–152, glutamine 244, and aspartate 264 each bind ATP; these read SGGLSNL and QYLPSRP. 77 to 79 lines the substrate pocket; sequence GLS.

This sequence belongs to the choline/ethanolamine kinase family. Homodimer, and heterodimer with CHKA. Expressed ubiquitously with the highest level in testis.

It catalyses the reaction choline + ATP = phosphocholine + ADP + H(+). The enzyme catalyses ethanolamine + ATP = phosphoethanolamine + ADP + H(+). It participates in phospholipid metabolism; phosphatidylethanolamine biosynthesis; phosphatidylethanolamine from ethanolamine: step 1/3. Has a key role in phospholipid metabolism, and catalyzes the first step of phosphatidylethanolamine and phosphatidylcholine biosynthesis. This Mus musculus (Mouse) protein is Choline/ethanolamine kinase (Chkb).